A 126-amino-acid polypeptide reads, in one-letter code: Anti-adapter protein IraD (126 aa).

Belongs to the GpW/Gp25 family. IraD subfamily. As to quaternary structure, interacts with RssB.

The protein resides in the cytoplasm. Its function is as follows. Inhibits RpoS proteolysis by regulating RssB activity, thereby increasing the stability of the sigma stress factor RpoS during oxidative stress. Its effect on RpoS stability is due to its interaction with RssB, which probably blocks the interaction of RssB with RpoS, and the consequent delivery of the RssB-RpoS complex to the ClpXP protein degradation pathway. This chain is Anti-adapter protein IraD, found in Salmonella paratyphi A (strain ATCC 9150 / SARB42).